We begin with the raw amino-acid sequence, 96 residues long: Large ribosomal subunit protein uL15 (96 aa).

The protein belongs to the universal ribosomal protein uL15 family. In terms of assembly, part of the 50S ribosomal subunit.

Binds to the 23S rRNA. The chain is Large ribosomal subunit protein uL15 (rplO) from Streptomyces scabiei.